The sequence spans 237 residues: CDP-diacylglycerol--serine O-phosphatidyltransferase (237 aa).

The next 8 helical transmembrane spans lie at 3 to 23, 25 to 45, 73 to 93, 95 to 115, 124 to 144, 150 to 170, 184 to 204, and 207 to 227; these read INPL…LGMM, IFYA…ASLI, VVAF…YNFG, IGMA…ARFN, YSFI…CVLL, FLEG…GVLM, WNLK…VRPL, and LSVF…FLMV.

This sequence belongs to the CDP-alcohol phosphatidyltransferase class-I family.

The protein localises to the cell membrane. It carries out the reaction a CDP-1,2-diacyl-sn-glycerol + L-serine = a 1,2-diacyl-sn-glycero-3-phospho-L-serine + CMP + H(+). The protein is CDP-diacylglycerol--serine O-phosphatidyltransferase (pssA) of Helicobacter pylori (strain J99 / ATCC 700824) (Campylobacter pylori J99).